Consider the following 375-residue polypeptide: Alcohol dehydrogenase class-3 chain H (375 aa).

A1 carries the N-acetylalanine modification. 7 residues coordinate Zn(2+): C46, H68, C98, C101, C104, C112, and C175.

It belongs to the zinc-containing alcohol dehydrogenase family. Class-III subfamily. In terms of assembly, homodimer or heterodimer with L chain. Requires Zn(2+) as cofactor.

It is found in the cytoplasm. It catalyses the reaction a primary alcohol + NAD(+) = an aldehyde + NADH + H(+). It carries out the reaction a secondary alcohol + NAD(+) = a ketone + NADH + H(+). The enzyme catalyses S-(hydroxymethyl)glutathione + NADP(+) = S-formylglutathione + NADPH + H(+). The catalysed reaction is S-(hydroxymethyl)glutathione + NAD(+) = S-formylglutathione + NADH + H(+). In terms of biological role, class-III ADH is remarkably ineffective in oxidizing ethanol, but it readily catalyzes the oxidation of long-chain primary alcohols and the oxidation of S-(hydroxymethyl) glutathione. This is Alcohol dehydrogenase class-3 chain H from Gadus morhua (Atlantic cod).